We begin with the raw amino-acid sequence, 326 residues long: Holliday junction branch migration complex subunit RuvB (326 aa).

A large ATPase domain (RuvB-L) region spans residues 1–180 (MKSISCGKEY…FGIPLHLEFY (180 aa)). ATP-binding positions include isoleucine 19, arginine 20, glycine 61, lysine 64, threonine 65, threonine 66, 127–129 (EDF), arginine 170, tyrosine 180, and arginine 217. Residue threonine 65 coordinates Mg(2+). Residues 181–251 (SFEELVNIIK…VADSVLLKLG (71 aa)) are small ATPAse domain (RuvB-S). Positions 254-326 (KMGLNKLDMN…QAKEYLSFQH (73 aa)) are head domain (RuvB-H). DNA contacts are provided by arginine 307 and arginine 312.

This sequence belongs to the RuvB family. In terms of assembly, homohexamer. Forms an RuvA(8)-RuvB(12)-Holliday junction (HJ) complex. HJ DNA is sandwiched between 2 RuvA tetramers; dsDNA enters through RuvA and exits via RuvB. An RuvB hexamer assembles on each DNA strand where it exits the tetramer. Each RuvB hexamer is contacted by two RuvA subunits (via domain III) on 2 adjacent RuvB subunits; this complex drives branch migration. In the full resolvosome a probable DNA-RuvA(4)-RuvB(12)-RuvC(2) complex forms which resolves the HJ.

Its subcellular location is the cytoplasm. The enzyme catalyses ATP + H2O = ADP + phosphate + H(+). Its function is as follows. The RuvA-RuvB-RuvC complex processes Holliday junction (HJ) DNA during genetic recombination and DNA repair, while the RuvA-RuvB complex plays an important role in the rescue of blocked DNA replication forks via replication fork reversal (RFR). RuvA specifically binds to HJ cruciform DNA, conferring on it an open structure. The RuvB hexamer acts as an ATP-dependent pump, pulling dsDNA into and through the RuvAB complex. RuvB forms 2 homohexamers on either side of HJ DNA bound by 1 or 2 RuvA tetramers; 4 subunits per hexamer contact DNA at a time. Coordinated motions by a converter formed by DNA-disengaged RuvB subunits stimulates ATP hydrolysis and nucleotide exchange. Immobilization of the converter enables RuvB to convert the ATP-contained energy into a lever motion, pulling 2 nucleotides of DNA out of the RuvA tetramer per ATP hydrolyzed, thus driving DNA branch migration. The RuvB motors rotate together with the DNA substrate, which together with the progressing nucleotide cycle form the mechanistic basis for DNA recombination by continuous HJ branch migration. Branch migration allows RuvC to scan DNA until it finds its consensus sequence, where it cleaves and resolves cruciform DNA. This chain is Holliday junction branch migration complex subunit RuvB, found in Wolbachia pipientis wMel.